We begin with the raw amino-acid sequence, 503 residues long: Cytochrome c-552 (503 aa).

The N-terminal stretch at 1-16 is a signal peptide; that stretch reads MKKNTIILVGALIAIA. A heme c-binding site is contributed by H102. Heme contacts are provided by C130, C133, and K134. 6 residues coordinate heme c: C168, C171, H172, C210, C213, and H214. Ca(2+) contacts are provided by E216, Y217, K273, and Q275. Position 217 (Y217) interacts with substrate. H276 lines the substrate pocket. Heme c is bound by residues H287, C294, C297, H298, H312, C325, C328, H329, and H404.

It belongs to the cytochrome c-552 family. Requires Ca(2+) as cofactor. Heme c is required as a cofactor.

It is found in the periplasm. The enzyme catalyses 6 Fe(III)-[cytochrome c] + NH4(+) + 2 H2O = 6 Fe(II)-[cytochrome c] + nitrite + 8 H(+). The protein operates within nitrogen metabolism; nitrate reduction (assimilation). Functionally, catalyzes the reduction of nitrite to ammonia, consuming six electrons in the process. This is Cytochrome c-552 from Maridesulfovibrio salexigens (strain ATCC 14822 / DSM 2638 / NCIMB 8403 / VKM B-1763) (Desulfovibrio salexigens).